A 163-amino-acid polypeptide reads, in one-letter code: Small heat shock protein C1 (163 aa).

One can recognise a sHSP domain in the interval 55-163 (MFYESSSIKS…EQDAKEITIN (109 aa)).

The protein belongs to the small heat shock protein (HSP20) family.

In Rickettsia typhi (strain ATCC VR-144 / Wilmington), this protein is Small heat shock protein C1 (hspC1).